The primary structure comprises 395 residues: Long-chain-alcohol dehydrogenase 1 (395 aa).

NAD(+)-binding positions include 98–102 and 141–144; these read GSALD and TTSG.

Belongs to the iron-containing alcohol dehydrogenase family. In terms of assembly, homooctamer.

The enzyme catalyses glycerol + NAD(+) = dihydroxyacetone + NADH + H(+). The catalysed reaction is a long-chain primary fatty alcohol + 2 NAD(+) + H2O = a long-chain fatty acid + 2 NADH + 3 H(+). Its function is as follows. Long-chain alkyl alcohol dehydrogenase that can oxidize a broad range of alkyl alcohols from ethanol to 1-triacontanol (C2 to C30) as well as 1,3-propanediol and acetaldehyde. The best substrate is ethanol. Also oxidizes glycerol. In Geobacillus thermodenitrificans (strain NG80-2), this protein is Long-chain-alcohol dehydrogenase 1 (adh1).